We begin with the raw amino-acid sequence, 149 residues long: Calmodulin (149 aa).

4 EF-hand domains span residues 8 to 43, 44 to 79, 81 to 116, and 117 to 149; these read QQIA…LGQN, PSES…KMKD, DSEA…IGEK, and LSDA…LAAK. 20 residues coordinate Ca(2+): D21, D23, D25, K27, E32, D57, N59, D61, S63, E68, D94, N96, D98, K100, E105, D130, N132, D134, E136, and E141.

It belongs to the calmodulin family.

Its function is as follows. Calmodulin mediates the control of a large number of enzymes, ion channels and other proteins by Ca(2+). Among the enzymes to be stimulated by the calmodulin-Ca(2+) complex are a number of protein kinases and phosphatases. In Candida albicans (Yeast), this protein is Calmodulin (CMD1).